Here is a 66-residue protein sequence, read N- to C-terminus: MILFQSNTTNTINVQTTLNHDMENHTTSYAYINIQPKYAMHLKITILIVIGILILSVILYFLFSYD.

N-linked (GlcNAc...) asparagine; by host glycosylation is found at Asn-7 and Asn-24. A helical membrane pass occupies residues 44-64; sequence ITILIVIGILILSVILYFLFS.

It is found in the host nucleus membrane. The sequence is that of Early E3 7.7 kDa protein from Human adenovirus B serotype 7 (HAdV-7).